Consider the following 469-residue polypeptide: Glutamate--tRNA ligase (469 aa).

Residues 9-19 (PSPTGYLHVGG) carry the 'HIGH' region motif. Residues Cys-98, Cys-100, Cys-125, and Asp-127 each coordinate Zn(2+). Residues 237-241 (KLSKR) carry the 'KMSKS' region motif. Position 240 (Lys-240) interacts with ATP.

The protein belongs to the class-I aminoacyl-tRNA synthetase family. Glutamate--tRNA ligase type 1 subfamily. In terms of assembly, monomer. Requires Zn(2+) as cofactor.

It localises to the cytoplasm. It catalyses the reaction tRNA(Glu) + L-glutamate + ATP = L-glutamyl-tRNA(Glu) + AMP + diphosphate. Catalyzes the attachment of glutamate to tRNA(Glu) in a two-step reaction: glutamate is first activated by ATP to form Glu-AMP and then transferred to the acceptor end of tRNA(Glu). In Serratia proteamaculans (strain 568), this protein is Glutamate--tRNA ligase.